The following is a 337-amino-acid chain: Ketol-acid reductoisomerase (NADP(+)) (337 aa).

The KARI N-terminal Rossmann domain maps to methionine 1–threonine 180. Residues tyrosine 24–glutamine 27, arginine 47, and serine 51 each bind NADP(+). Residue histidine 106 is part of the active site. Glycine 132 is an NADP(+) binding site. A KARI C-terminal knotted domain is found at threonine 181–isoleucine 326. Positions 189, 193, 225, and 229 each coordinate Mg(2+). Serine 250 lines the substrate pocket.

Belongs to the ketol-acid reductoisomerase family. Mg(2+) is required as a cofactor.

It carries out the reaction (2R)-2,3-dihydroxy-3-methylbutanoate + NADP(+) = (2S)-2-acetolactate + NADPH + H(+). It catalyses the reaction (2R,3R)-2,3-dihydroxy-3-methylpentanoate + NADP(+) = (S)-2-ethyl-2-hydroxy-3-oxobutanoate + NADPH + H(+). It functions in the pathway amino-acid biosynthesis; L-isoleucine biosynthesis; L-isoleucine from 2-oxobutanoate: step 2/4. It participates in amino-acid biosynthesis; L-valine biosynthesis; L-valine from pyruvate: step 2/4. Involved in the biosynthesis of branched-chain amino acids (BCAA). Catalyzes an alkyl-migration followed by a ketol-acid reduction of (S)-2-acetolactate (S2AL) to yield (R)-2,3-dihydroxy-isovalerate. In the isomerase reaction, S2AL is rearranged via a Mg-dependent methyl migration to produce 3-hydroxy-3-methyl-2-ketobutyrate (HMKB). In the reductase reaction, this 2-ketoacid undergoes a metal-dependent reduction by NADPH to yield (R)-2,3-dihydroxy-isovalerate. The protein is Ketol-acid reductoisomerase (NADP(+)) of Neisseria meningitidis serogroup A / serotype 4A (strain DSM 15465 / Z2491).